A 343-amino-acid chain; its full sequence is tRNA N6-adenosine threonylcarbamoyltransferase (343 aa).

Residues H120 and H124 each contribute to the Fe cation site. Residues 142-146, D175, G188, D192, and N281 contribute to the substrate site; that span reads VVSGG. D309 serves as a coordination point for Fe cation.

This sequence belongs to the KAE1 / TsaD family. Fe(2+) serves as cofactor.

Its subcellular location is the cytoplasm. The catalysed reaction is L-threonylcarbamoyladenylate + adenosine(37) in tRNA = N(6)-L-threonylcarbamoyladenosine(37) in tRNA + AMP + H(+). Functionally, required for the formation of a threonylcarbamoyl group on adenosine at position 37 (t(6)A37) in tRNAs that read codons beginning with adenine. Is involved in the transfer of the threonylcarbamoyl moiety of threonylcarbamoyl-AMP (TC-AMP) to the N6 group of A37, together with TsaE and TsaB. TsaD likely plays a direct catalytic role in this reaction. This Halalkalibacterium halodurans (strain ATCC BAA-125 / DSM 18197 / FERM 7344 / JCM 9153 / C-125) (Bacillus halodurans) protein is tRNA N6-adenosine threonylcarbamoyltransferase.